The following is a 485-amino-acid chain: MVAIDLGASSGRVMLASYYPGQQQLTLREVCRFTNQIKSIDGSDVWDIDAIEQSIREGLSQLDSEGIALDSIGIDSWGVDFVLLDKQGKRIGQPVYYRDSRTQGVMARAQQTLGSNAIYRRTGIQFLPFNTLYQLRALSEQQPHLLADVAHLLLIPDYLHYRLTGQLNWEYTNASTTQLLNIETGDWDSDLLAYAGVPAHWFAKPGKPGNTIGYWHSANGQQVPVVAVATHDTASAVLAAPLIDADAAYLSSGTWSLMGFESGTPLTHQQAQCSNITNEGGAEGRYRVLKNIMGLWLLQRATDELQIDDLPQLIEQAARQPACRSLINPNDSRFINPPNMCREIQNACREHQFPVPNTAAQLARCIFDSLAMLYRQVAQELATLRGRPISHLHIVGGGCQNQFLNQLCADACGLNVSMGPVEASTLGNIGSQLISLGEVADVTHYRRIVANNFPLHHLSPHDNSDFAAHWLQFQSLSQLPKELCI.

8–12 (ASSGR) serves as a coordination point for ATP. Residues G78 and 231-233 (HDT) contribute to the substrate site. D232 acts as the Proton acceptor in catalysis. T254 lines the ATP pocket. N291 contributes to the substrate binding site. Q299 provides a ligand contact to ATP. Residues C348 and C365 are joined by a disulfide bond. G397 lines the ATP pocket. C408 and C412 are oxidised to a cystine.

It belongs to the rhamnulokinase family. The cofactor is Mg(2+).

The enzyme catalyses L-rhamnulose + ATP = L-rhamnulose 1-phosphate + ADP + H(+). Its pathway is carbohydrate degradation; L-rhamnose degradation; glycerone phosphate from L-rhamnose: step 2/3. Involved in the catabolism of L-rhamnose (6-deoxy-L-mannose). Catalyzes the transfer of the gamma-phosphate group from ATP to the 1-hydroxyl group of L-rhamnulose to yield L-rhamnulose 1-phosphate. This is Rhamnulokinase from Yersinia pestis bv. Antiqua (strain Angola).